We begin with the raw amino-acid sequence, 229 residues long: Synaptogyrin-3 (229 aa).

An N-acetylmethionine modification is found at Met1. Positions 20-172 (FARRPQTLLR…LTVKALQRFR (153 aa)) constitute an MARVEL domain. A run of 4 helical transmembrane segments spans residues 30-50 (VVSW…GYVN), 70-90 (FGVV…LLDV), 105-125 (VLLD…GFCF), and 148-168 (AAIA…VKAL). Positions 209-223 (QSPPFTETLDTSSKG) are enriched in polar residues. Residues 209–229 (QSPPFTETLDTSSKGYQVPAY) form a disordered region.

This sequence belongs to the synaptogyrin family. As to quaternary structure, interacts (via N-terminus) with SLC6A3 (via N-terminus). May interact with VMAT2. In terms of tissue distribution, specifically expressed in brain. Found in the brain across the dorsal and ventral corpus striatum as well as in the cortex.

Its subcellular location is the cytoplasmic vesicle. The protein localises to the secretory vesicle. The protein resides in the synaptic vesicle membrane. It localises to the synapse. May play a role in regulated exocytosis. May indirectly regulate the activity of the plasma membrane dopamine transporter SLC6A3 and thereby regulate dopamine transport back from the synaptic cleft into the presynaptic terminal. This Mus musculus (Mouse) protein is Synaptogyrin-3.